We begin with the raw amino-acid sequence, 301 residues long: ATP synthase gamma chain (301 aa).

Belongs to the ATPase gamma chain family. F-type ATPases have 2 components, CF(1) - the catalytic core - and CF(0) - the membrane proton channel. CF(1) has five subunits: alpha(3), beta(3), gamma(1), delta(1), epsilon(1). CF(0) has three main subunits: a, b and c.

It localises to the cell inner membrane. Produces ATP from ADP in the presence of a proton gradient across the membrane. The gamma chain is believed to be important in regulating ATPase activity and the flow of protons through the CF(0) complex. The sequence is that of ATP synthase gamma chain from Helicobacter pylori (strain ATCC 700392 / 26695) (Campylobacter pylori).